The sequence spans 200 residues: Recombination protein RecR (200 aa).

The segment at 59–74 adopts a C4-type zinc-finger fold; sequence CSTCGNIDSQNPCTVC. The region spanning 82–177 is the Toprim domain; it reads SIIVVVADVA…KVTRLAHGVP (96 aa).

It belongs to the RecR family.

Functionally, may play a role in DNA repair. It seems to be involved in an RecBC-independent recombinational process of DNA repair. It may act with RecF and RecO. The chain is Recombination protein RecR from Rhodopseudomonas palustris (strain ATCC BAA-98 / CGA009).